The following is a 284-amino-acid chain: 2,3,4,5-tetrahydropyridine-2,6-dicarboxylate N-succinyltransferase (284 aa).

Substrate-binding residues include R111 and D148.

This sequence belongs to the transferase hexapeptide repeat family. As to quaternary structure, homotrimer.

Its subcellular location is the cytoplasm. The enzyme catalyses (S)-2,3,4,5-tetrahydrodipicolinate + succinyl-CoA + H2O = (S)-2-succinylamino-6-oxoheptanedioate + CoA. The protein operates within amino-acid biosynthesis; L-lysine biosynthesis via DAP pathway; LL-2,6-diaminopimelate from (S)-tetrahydrodipicolinate (succinylase route): step 1/3. This is 2,3,4,5-tetrahydropyridine-2,6-dicarboxylate N-succinyltransferase from Chelativorans sp. (strain BNC1).